The sequence spans 535 residues: MYLQRWLFSTNAKDIAILYFIFSTFCGLAGTAMSFIIRMELSAPGQQYLQGQNQLFNVLVTGHTILMVFFLVMPMLIGGFGNYYLPLMIGASDMSFARLNNISFWTLPPTLICLLTSTMVESGTGTGWTVYPPLSSIQSHSGASVDLAIFSLHLTTISSLLGTINFIVTALNMRTNGMTLHKMPLFTWSILITAVMLLMSLPVLSAGVTMLLMDRNFNTSFFEVQGGGDPILYQHLFWFFGHPEVYIMIVPTFGMMSHIVSTYSKKPVFGEISMIYTMGSISLLGFLVWSHHMYVVGLDTDTRAYFTSATMIITIPTSIKVFSWLTTIYGGSLRLTTPMLYTLSFLFLFTVGGLTGVVLANTSLDVAFHDTYYVVTHFHYVLSLGAVFSMFAGYYYWSPTVLGLNYNEKLSQIQFWLIFLGTNIIFFPMHFLGINGMPRRIPDYPDTFTGWNLVSSFGSMMTIMSLMLFTYIIYDQLMNGLTNKVNNKSINYMKTPDFIESNNIFLMNTTKSSSIEFMLNSPPTIHSFNTPTIQS.

Residues 15–37 (IAILYFIFSTFCGLAGTAMSFII) traverse the membrane as a helical segment. 3 residues coordinate Ca(2+): glutamate 40, alanine 43, and glycine 45. A run of 5 helical transmembrane segments spans residues 58–80 (VLVTGHTILMVFFLVMPMLIGGF), 147–169 (LAIFSLHLTTISSLLGTINFIVT), 190–212 (ILITAVMLLMSLPVLSAGVTMLL), 238–260 (WFFGHPEVYIMIVPTFGMMSHIV), and 267–289 (PVFGEISMIYTMGSISLLGFLVW). Position 63 (histidine 63) interacts with Fe(II)-heme a. Position 242 (histidine 242) interacts with Cu cation. Positions 242–246 (HPEVY) form a cross-link, 1'-histidyl-3'-tyrosine (His-Tyr). Tyrosine 246 contacts O2. The Cu cation site is built by histidine 291 and histidine 292. Helical transmembrane passes span 304–326 (AYFTSATMIITIPTSIKVFSWLT) and 339–361 (MLYTLSFLFLFTVGGLTGVVLAN). The Mg(2+) site is built by histidine 369 and aspartate 370. A run of 2 helical transmembrane segments spans residues 376 to 398 (THFHYVLSLGAVFSMFAGYYYWS) and 415 to 437 (FWLIFLGTNIIFFPMHFLGINGM). Histidine 377 contacts heme a3. Histidine 379 is a binding site for Fe(II)-heme a. Ca(2+) is bound at residue proline 442. Residues 452 to 474 (NLVSSFGSMMTIMSLMLFTYIIY) traverse the membrane as a helical segment.

The protein belongs to the heme-copper respiratory oxidase family. Component of the cytochrome c oxidase (complex IV, CIV), a multisubunit enzyme composed of a catalytic core of 3 subunits and several supernumerary subunits. The complex exists as a monomer or a dimer and forms supercomplexes (SCs) in the inner mitochondrial membrane with ubiquinol-cytochrome c oxidoreductase (cytochrome b-c1 complex, complex III, CIII). Requires heme as cofactor. Cu cation serves as cofactor.

It localises to the mitochondrion inner membrane. The catalysed reaction is 4 Fe(II)-[cytochrome c] + O2 + 8 H(+)(in) = 4 Fe(III)-[cytochrome c] + 2 H2O + 4 H(+)(out). It functions in the pathway energy metabolism; oxidative phosphorylation. Its function is as follows. Component of the cytochrome c oxidase, the last enzyme in the mitochondrial electron transport chain which drives oxidative phosphorylation. The respiratory chain contains 3 multisubunit complexes succinate dehydrogenase (complex II, CII), ubiquinol-cytochrome c oxidoreductase (cytochrome b-c1 complex, complex III, CIII) and cytochrome c oxidase (complex IV, CIV), that cooperate to transfer electrons derived from NADH and succinate to molecular oxygen, creating an electrochemical gradient over the inner membrane that drives transmembrane transport and the ATP synthase. Cytochrome c oxidase is the component of the respiratory chain that catalyzes the reduction of oxygen to water. Electrons originating from reduced cytochrome c in the intermembrane space (IMS) are transferred via the dinuclear copper A center (CU(A)) of subunit 2 and heme A of subunit 1 to the active site in subunit 1, a binuclear center (BNC) formed by heme A3 and copper B (CU(B)). The BNC reduces molecular oxygen to 2 water molecules using 4 electrons from cytochrome c in the IMS and 4 protons from the mitochondrial matrix. This chain is Cytochrome c oxidase subunit 1 (COX1), found in Eremothecium gossypii (strain ATCC 10895 / CBS 109.51 / FGSC 9923 / NRRL Y-1056) (Yeast).